A 118-amino-acid polypeptide reads, in one-letter code: ATP synthase subunit g, mitochondrial (118 aa).

In terms of assembly, F-type ATP synthases have 2 components, the catalytic core F(1) and the membrane-embedded component F(0), linked together by a central stalk and a peripheral stalk. The central stalk, also called rotor shaft, is often seen as part of F(1). The peripheral stalk is seen as part of F(0). F(0) contains the membrane channel next to the rotor. F-type ATP synthases form dimers but each monomer functions independently in ATP generation. The dimer consists of 18 different polypeptides: ATP1 (subunit alpha, part of F(1), 3 molecules per monomer), ATP2 (subunit beta, part of F(1), 3 molecules per monomer), ATP3 (subunit gamma, part of the central stalk), ATP4 (subunit b, part of the peripheral stalk), ATP5/OSCP (subunit 5/OSCP, part of the peripheral stalk), ATP6 (subunit a, part of the peripheral stalk), ATP7 (subunit d, part of the peripheral stalk), ATP8 (subunit 8, part of the peripheral stalk), OLI1 (subunit c, part of the rotor, 10 molecules per monomer), ATP14 (subunit h, part of the peripheral stalk), ATP15 (subunit epsilon, part of the central stalk), ATP16 (subunit delta, part of the central stalk), ATP17 (subunit f, part of the peripheral stalk), ATP18 (subunit i/j, part of the peripheral stalk). Dimer-specific subunits are ATP19 (subunit k, at interface between monomers), ATP20 (subunit g, at interface between monomers), TIM11 (subunit e, at interface between monomers). Also contains subunit L.

Its subcellular location is the mitochondrion inner membrane. Its function is as follows. Mitochondrial membrane ATP synthase (F(1)F(0) ATP synthase or Complex V) produces ATP from ADP in the presence of a proton gradient across the membrane which is generated by electron transport complexes of the respiratory chain. F-type ATP synthases consist of two structural domains, F(1) - containing the extramembraneous catalytic core, and F(0) - containing the membrane proton channel, linked together by a central stalk and a peripheral stalk. During catalysis, ATP synthesis in the catalytic domain of F(1) is coupled via a rotary mechanism of the central stalk subunits to proton translocation. Part of the complex F(0) domain Minor subunit located with subunit a/ATP6 in the membrane. Together with subunit e/TIM11, probably contributes to membrane curvature at the site of the ATP synthase dimer, ultimately contributing to formation of cristae. The chain is ATP synthase subunit g, mitochondrial from Pichia angusta (Yeast).